Here is a 122-residue protein sequence, read N- to C-terminus: Large ribosomal subunit protein uL14 (122 aa).

The protein belongs to the universal ribosomal protein uL14 family. Part of the 50S ribosomal subunit. Forms a cluster with proteins L3 and L19. In the 70S ribosome, L14 and L19 interact and together make contacts with the 16S rRNA in bridges B5 and B8.

In terms of biological role, binds to 23S rRNA. Forms part of two intersubunit bridges in the 70S ribosome. This Kosmotoga olearia (strain ATCC BAA-1733 / DSM 21960 / TBF 19.5.1) protein is Large ribosomal subunit protein uL14.